The sequence spans 355 residues: Peptide chain release factor 1 (355 aa).

Residue Gln233 is modified to N5-methylglutamine.

The protein belongs to the prokaryotic/mitochondrial release factor family. In terms of processing, methylated by PrmC. Methylation increases the termination efficiency of RF1.

It localises to the cytoplasm. Functionally, peptide chain release factor 1 directs the termination of translation in response to the peptide chain termination codons UAG and UAA. In Bacillus anthracis, this protein is Peptide chain release factor 1.